The sequence spans 736 residues: Epithelial splicing regulatory protein 2 (736 aa).

RRM domains follow at residues 224–301 (TVIR…KATG), 325–405 (MIIR…RSTA), and 659–736 (ALVR…ACCE).

It belongs to the ESRP family.

The protein resides in the nucleus. MRNA splicing factor that regulates the formation of epithelial cell-specific isoforms. Specifically regulates the expression of FGFR2-IIIb, an epithelial cell-specific isoform of fgfr2. Acts by directly binding specific sequences in mRNAs. Binds the GU-rich sequence motifs in the ISE/ISS-3, a cis-element regulatory region present in the mRNA of fgfr2. This chain is Epithelial splicing regulatory protein 2 (esrp2), found in Danio rerio (Zebrafish).